Reading from the N-terminus, the 274-residue chain is Diaminopimelate epimerase (274 aa).

Substrate-binding residues include asparagine 11, glutamine 44, and asparagine 64. Cysteine 73 (proton donor) is an active-site residue. Residues 74-75 (GN), asparagine 157, asparagine 190, and 208-209 (ER) each bind substrate. The active-site Proton acceptor is the cysteine 217. 218–219 (GS) is a binding site for substrate.

The protein belongs to the diaminopimelate epimerase family. As to quaternary structure, homodimer.

It is found in the cytoplasm. The enzyme catalyses (2S,6S)-2,6-diaminopimelate = meso-2,6-diaminopimelate. It functions in the pathway amino-acid biosynthesis; L-lysine biosynthesis via DAP pathway; DL-2,6-diaminopimelate from LL-2,6-diaminopimelate: step 1/1. Catalyzes the stereoinversion of LL-2,6-diaminopimelate (L,L-DAP) to meso-diaminopimelate (meso-DAP), a precursor of L-lysine and an essential component of the bacterial peptidoglycan. This chain is Diaminopimelate epimerase, found in Pectobacterium atrosepticum (strain SCRI 1043 / ATCC BAA-672) (Erwinia carotovora subsp. atroseptica).